The sequence spans 485 residues: Trigger factor (485 aa).

Residues 169–261 (GDVAIVDFVG…LKELKEKELP (93 aa)) enclose the PPIase FKBP-type domain.

Belongs to the FKBP-type PPIase family. Tig subfamily.

It is found in the cytoplasm. The enzyme catalyses [protein]-peptidylproline (omega=180) = [protein]-peptidylproline (omega=0). Functionally, involved in protein export. Acts as a chaperone by maintaining the newly synthesized protein in an open conformation. Functions as a peptidyl-prolyl cis-trans isomerase. This chain is Trigger factor, found in Trichodesmium erythraeum (strain IMS101).